We begin with the raw amino-acid sequence, 612 residues long: MDYGDIYIAEETEWDKYNRQINKNPDDFDAWEGLVRASEHLEGGVGRNSSKQAINTLRSVYDRFLGKYPLLFGYWKKYADFEFFVAGAEASEHIYERGIAGIPHSVDLWTNYCAFKMETNGDANEVRELFMQGANMVGLDFLSHPFWDKYLEFEERQERPDNVFQLLERLIHIPLHQYARYFERFVQVSQSQPIQQLLPPDVLASIRADVTREPAKVVSAGSKQITVERGELEIEREMRARIYNIHLQIFQKVQLETAKRWTFESEIKRPYFHVKELDEAQLVNWRKYLDFEEVEGDFQRICHLYERCLITCALYDEFWFRYARWMSAQPDHLNDVSIIYERASCIFASISRPGIRVQYALFEESQGNIASAKAIYQSILTQLPGNLEAVLGWVGLERRNAPNYDLTNAHAVLRSIINEGKCNTGITEVLITEDIKLVWKIEGDIELARNMFLQNAPALLDCRHFWISFLRFELEQPLNSKNYTEHHARVSNVMEMIRNKTRLPPRTIMDLTKLYMEYLCHQSNDPSVLQEYLLIDRDVFGPFSVRESHWKKLDEGQDLKQVSTRLLSTNGHPGISVNEAKIKSGESPYEKYYRLQGVVETVTSGVAANGSS.

HAT repeat units follow at residues 158–191 (ERPD…VSQS) and 367–399 (GNIA…LERR).

Belongs to the PRP39 family.

It is found in the nucleus. Function prior to stable branch point recognition by the U1 snRNP particle to facilitate or stabilize the U1 snRNP/5'-splice site interaction. Has a direct role in the assembly or function of a catalytically active spliceosome. This is Pre-mRNA-processing factor 39 (prp39) from Schizosaccharomyces pombe (strain 972 / ATCC 24843) (Fission yeast).